Reading from the N-terminus, the 139-residue chain is uncharacterized protein (139 aa).

An HTH asnC-type domain is found at 1 to 62; sequence MDDTDLQILS…NICYEKLNKH (62 aa). Positions 20–39 form a DNA-binding region, H-T-H motif; it reads MVELGKLVGLSSPSAAERVR.

This is an uncharacterized protein from Bacillus subtilis (strain 168).